The following is a 174-amino-acid chain: Adenylate kinase (174 aa).

The tract at residues 12 to 41 is NMP; the sequence is STGDMLRAAIKAGTPLGLEAKKIIDEGGLV. AMP-binding positions include threonine 13, arginine 18, 39–41, 67–70, and glutamine 74; these read GLV and GFPR. The interval 104–141 is LID; the sequence is GRRVHLASGRTYHVTYNPPKVEGKDDVTGEDLIQRDDD. ATP contacts are provided by residues arginine 105 and 114–115; that span reads TY. Residues arginine 138 and arginine 149 each contribute to the AMP site.

It belongs to the adenylate kinase family. In terms of assembly, monomer.

It is found in the cytoplasm. It carries out the reaction AMP + ATP = 2 ADP. It participates in purine metabolism; AMP biosynthesis via salvage pathway; AMP from ADP: step 1/1. Catalyzes the reversible transfer of the terminal phosphate group between ATP and AMP. Plays an important role in cellular energy homeostasis and in adenine nucleotide metabolism. This chain is Adenylate kinase, found in Neisseria cinerea.